Consider the following 468-residue polypeptide: Replication factor C large subunit (468 aa).

50–57 (GPPGSGKT) is an ATP binding site. The disordered stretch occupies residues 422 to 456 (EEKAVEEKVEEEEAEEEEEEERKEEEKPKAEKKKG). Residues 429–444 (KVEEEEAEEEEEEERK) show a composition bias toward acidic residues.

This sequence belongs to the activator 1 small subunits family. RfcL subfamily. Heteromultimer composed of small subunits (RfcS) and large subunits (RfcL).

Its function is as follows. Part of the RFC clamp loader complex which loads the PCNA sliding clamp onto DNA. The protein is Replication factor C large subunit of Pyrococcus horikoshii (strain ATCC 700860 / DSM 12428 / JCM 9974 / NBRC 100139 / OT-3).